The primary structure comprises 375 residues: E3 ubiquitin-protein ligase IE2 (375 aa).

Positions 1-12 (MSRINNADTPTN) are enriched in polar residues. Disordered regions lie at residues 1-61 (MSRI…VGDR) and 115-142 (LTTT…DYNS). An RING-type zinc finger spans residues 177–225 (CHICSCTFTDIKNYNSNFVTSSECNHAVCFKCYVSIVFNKEAYKCSICN). Positions 272–348 (KTIIEELQLE…TFLQNQLDAQ (77 aa)) form a coiled coil.

It belongs to the alphabaculovirus IE2 protein family. In terms of assembly, homooligomer. In terms of processing, auto-ubiquitinated.

The protein resides in the host nucleus. It carries out the reaction S-ubiquitinyl-[E2 ubiquitin-conjugating enzyme]-L-cysteine + [acceptor protein]-L-lysine = [E2 ubiquitin-conjugating enzyme]-L-cysteine + N(6)-ubiquitinyl-[acceptor protein]-L-lysine.. Functionally, RING-finger E3 ubiquitin ligase that plays an important regulatory role during the initial stages of infection. Migrates to specific nuclear foci early in infection supposely to prepare the sites for viral replication by targeting and ubiquitinating host proteins. This is E3 ubiquitin-protein ligase IE2 (IE2) from Hyphantria cunea nuclear polyhedrosis virus (HcNPV).